A 428-amino-acid chain; its full sequence is 3-phosphoshikimate 1-carboxyvinyltransferase (428 aa).

3 residues coordinate 3-phosphoshikimate: K23, S24, and R28. Residue K23 coordinates phosphoenolpyruvate. 2 residues coordinate phosphoenolpyruvate: G97 and R125. 7 residues coordinate 3-phosphoshikimate: S170, S171, Q172, S198, D314, N337, and K341. Q172 contributes to the phosphoenolpyruvate binding site. Residue D314 is the Proton acceptor of the active site. The phosphoenolpyruvate site is built by R345, R387, and K412.

Belongs to the EPSP synthase family. In terms of assembly, monomer.

The protein resides in the cytoplasm. The enzyme catalyses 3-phosphoshikimate + phosphoenolpyruvate = 5-O-(1-carboxyvinyl)-3-phosphoshikimate + phosphate. It participates in metabolic intermediate biosynthesis; chorismate biosynthesis; chorismate from D-erythrose 4-phosphate and phosphoenolpyruvate: step 6/7. Catalyzes the transfer of the enolpyruvyl moiety of phosphoenolpyruvate (PEP) to the 5-hydroxyl of shikimate-3-phosphate (S3P) to produce enolpyruvyl shikimate-3-phosphate and inorganic phosphate. The protein is 3-phosphoshikimate 1-carboxyvinyltransferase of Buchnera aphidicola subsp. Schizaphis graminum (strain Sg).